Consider the following 219-residue polypeptide: 2-hydroxy-3-keto-5-methylthiopentenyl-1-phosphate phosphatase (219 aa).

This sequence belongs to the HAD-like hydrolase superfamily. MtnX family.

The catalysed reaction is 2-hydroxy-5-methylsulfanyl-3-oxopent-1-enyl phosphate + H2O = 1,2-dihydroxy-5-(methylsulfanyl)pent-1-en-3-one + phosphate. It functions in the pathway amino-acid biosynthesis; L-methionine biosynthesis via salvage pathway; L-methionine from S-methyl-5-thio-alpha-D-ribose 1-phosphate: step 4/6. Dephosphorylates 2-hydroxy-3-keto-5-methylthiopentenyl-1-phosphate (HK-MTPenyl-1-P) yielding 1,2-dihydroxy-3-keto-5-methylthiopentene (DHK-MTPene). The polypeptide is 2-hydroxy-3-keto-5-methylthiopentenyl-1-phosphate phosphatase (Bacillus cereus (strain ZK / E33L)).